Here is a 456-residue protein sequence, read N- to C-terminus: Elongator complex protein 4 (456 aa).

Positions 1 to 11 (MSFRKRGEILN) are enriched in basic and acidic residues. The tract at residues 1 to 91 (MSFRKRGEIL…SQPTTSTGSA (91 aa)) is disordered. Arg13 bears the Omega-N-methylarginine mark. The span at 18 to 27 (RGPLLRGPPR) shows a compositional bias: low complexity. Residues 57 to 66 (NIADESKTKM) show a composition bias toward basic and acidic residues. A compositionally biased stretch (low complexity) spans 77–90 (PSPATSQPTTSTGS). Ser222 is subject to Phosphoserine. Residues 424 to 444 (EGSAASEQSHSHSHSDEISHN) are disordered. The segment covering 432–442 (SHSHSHSDEIS) has biased composition (basic and acidic residues).

The protein belongs to the ELP4 family. Component of the elongator complex which consists of ELP1/IKI3, ELP2, ELP3, ELP4, ELP5/IKI1 and ELP6. The elongator complex is composed of two copies of the Elp123 subcomplex (composed of ELP1/IKI3, ELP2 and ELP3) and two copies of the Elp456 subcomplex (composed of ELP4, ELP5/IKI1 and ELP6). The Elp123 subcomplex forms a two-lobed scaffold, which binds the Elp456 subcomplex asymmetrically. In each lobe, ELP2 is tightly sandwiched between ELP1/IKI3 and ELP3. The Elp123 subcomplex binds tRNA through ELP1/IKI3 and ELP3 and can bind 2 tRNAs simultaneously. tRNA-binding by the Elp123 subcomplex induces conformational rearrangements which precisely position the targeted anticodon base in the active site. The Elp456 subcomplex binds tRNA and has ATPase activity. ELP4 interacts with KTI12.

The protein resides in the cytoplasm. It localises to the nucleus. Its pathway is tRNA modification; 5-methoxycarbonylmethyl-2-thiouridine-tRNA biosynthesis. In terms of biological role, component of the elongator complex, a multiprotein complex which is required for multiple tRNA modifications, including mcm5U (5-methoxycarbonylmethyl uridine), mcm5s2U (5-methoxycarbonylmethyl-2-thiouridine), and ncm5U (5-carbamoylmethyl uridine). The elongator complex catalyzes formation of carboxymethyluridine in the wobble base at position 34 in tRNAs. It functions as a gamma-toxin target (TOT); disruption of the complex confers resistance to Kluyveromyces lactis toxin zymocin (pGKL1 killer toxin). May also be involved in sensitivity to Pichia inositovora toxin. The chain is Elongator complex protein 4 from Saccharomyces cerevisiae (strain ATCC 204508 / S288c) (Baker's yeast).